Reading from the N-terminus, the 717-residue chain is F-box only protein 42 (717 aa).

Over residues 1 to 30 (MASSSDSEDDSVMAVDQEETALEGTMEQDE) the composition is skewed to acidic residues. Residues 1-34 (MASSSDSEDDSVMAVDQEETALEGTMEQDEDPHP) are disordered. The region spanning 44–93 (NRSMSELPEEVLEYILSFLSPYQEHKTAALVCKQWYRLIKGVAHQCYHGF) is the F-box domain. 4 Kelch repeats span residues 132–184 (SMYV…VYKD), 186–242 (LVLF…VIGD), 244–293 (MIVF…VIDD), and 295–342 (TLLI…LWCH). Residues 361–452 (RAPLSPSLNS…NLSPGTVAVG (92 aa)) form a disordered region. Positions 363–376 (PLSPSLNSRPSPIS) are enriched in low complexity. 2 positions are modified to phosphoserine: S365 and S373. Residue T378 is modified to Phosphothreonine. Residues 416–426 (QRQTPSGSREG) are compositionally biased toward polar residues. S552 carries the post-translational modification Phosphoserine. Residues 570–595 (GPSASAALSPPLGSSPSSPGSQSLSS) are compositionally biased toward low complexity. The interval 570 to 632 (GPSASAALSP…HHPPQSLNVG (63 aa)) is disordered.

As to quaternary structure, component of some SCF complex, composed of CUL1, SKP1, RBX1 and FBXO42. Interacts (via the kelch domain) with p53/TP53; interaction is direct.

In terms of biological role, substrate-recognition component of some SCF (SKP1-CUL1-F-box protein)-type E3 ubiquitin ligase complex. Specifically recognizes p53/TP53, promoting its ubiquitination and degradation. The chain is F-box only protein 42 (Fbxo42) from Mus musculus (Mouse).